Consider the following 205-residue polypeptide: Small ribosomal subunit protein uS4 (205 aa).

Residues 94–157 (SRLDTVVYRM…QQIPLIQESI (64 aa)) form the S4 RNA-binding domain.

The protein belongs to the universal ribosomal protein uS4 family. In terms of assembly, part of the 30S ribosomal subunit. Contacts protein S5. The interaction surface between S4 and S5 is involved in control of translational fidelity.

Functionally, one of the primary rRNA binding proteins, it binds directly to 16S rRNA where it nucleates assembly of the body of the 30S subunit. Its function is as follows. With S5 and S12 plays an important role in translational accuracy. The chain is Small ribosomal subunit protein uS4 from Rickettsia typhi (strain ATCC VR-144 / Wilmington).